The following is a 1164-amino-acid chain: MFKSNYERKMRYSIRKFSVGVASVAVASLFMGSVAHASELVKDDSVKTTEVAAKPYPSMAQTDQGNNSSSSELETTKMEIPTTDIKKAVEPVEKTAGETSATDTGKREKQLQQWKNNLKNDVDNTILSHEQKNEFKTKIDETNDSDALLELENQFNETNRLLHIKQHEEVEKDKKAKQQKTLKQSDTKVDLSNIDKELNHQKSQVEKMAEQKGITNEDKDSMLKKIEDIRKQAQQADKKEDAEVKVREELGKLFSSTKAGLDQEIQEHVKKETSSEENTQKVDEHYANSLQNLAQKSLEELDKATTNEQATQVKNQFLENAQKLKEIQPLIKETNVKLYKAMSESLEQVEKELKHNSEANLEDLVAKSKEIVREYEGKLNQSKNLPELKQLEEEAHSKLKQVVEDFRKKFKTSEQVTPKKRVKRDLAANENNQQKIELTVSPENITVYEGEDVKFTVTAKSDSKTTLDFSDLLTKYNPSVSDRISTNYKTNTDNHKIAEITIKNLKLNESQTVTLKAKDDSGNVVEKTFTITVQKKEEKQVPKTPEQKDSKTEEKVPQEPKSNDKNQLQELIKSAQQELEKLEKAIKELMEQPEIPSNPEYGIQKSIWESQKEPIQEAITSFKKIIGDSSSKYYTEHYFNKYKSDFMNYQLHAQMEMLTRKVVQYMNKYPDNAEIKKIFESDMKRTKEDNYGSLENDALKGYFEKYFLTPFNKIKQIVDDLDKKVEQDQPAPIPENSEMDQAKEKAKIAVSKYMSKVLDGVHQHLQKKNNSKIVDLFKELEAIKQQTIFDIDNAKTEVEIDNLVHDAFSKMNATVAKFQKGLETNTPETPDTPKIPELPQAPDTPQAPDTPHVPESPKAPEAPRVPESPKTPEAPHVPESPKAPEAPRVPESPKTPEAPHVPESPKTPEAPKIPEPPKTPDVPKLPDVPKLPDVPKLPDAPKLPDGLNKVGQAVFTSTDGNTKVTVVFDKPTDADKLHLKEVTTKELADKIAHKTGGGTVRVFDLSLSKGGKETHVNGERTVRLALGQTGSDVHVYHVKENGDLERIPSKVENGQVVFKTNHFSLFAIKTLSKDQNVTPPKQTKPSTQGSQVEIAESQTGKFQSKAANHKALATGNETVAKGNPTSTTEKKLPYTGVASNLVLEIMGLLGLIGTSFIAMKRRKS.

The signal sequence occupies residues methionine 1–alanine 37. Disordered regions lie at residues lysine 54–threonine 75 and histidine 167–aspartate 220. The segment covering methionine 59–leucine 73 has biased composition (polar residues). Composition is skewed to basic and acidic residues over residues histidine 167 to alanine 176 and lysine 183 to aspartate 220. IgA-binding stretches follow at residues asparagine 199–leucine 438 and threonine 439–threonine 826. The Ig-like domain occupies glutamine 434–glutamine 534. A compositionally biased stretch (basic and acidic residues) spans lysine 536–aspartate 564. 2 disordered regions span residues lysine 536–glutamine 567 and glutamate 823–leucine 947. Residues proline 911–proline 920 show a composition bias toward pro residues. The LPXTG sorting signal motif lies at leucine 1132–glycine 1136. Threonine 1135 is modified (pentaglycyl murein peptidoglycan amidated threonine). A propeptide spans glycine 1136–serine 1164 (removed by sortase).

The protein localises to the secreted. It is found in the cell wall. This chain is IgA FC receptor (bag), found in Streptococcus agalactiae.